The sequence spans 384 residues: 1-deoxy-D-xylulose 5-phosphate reductoisomerase (384 aa).

NADPH is bound by residues threonine 11, glycine 12, serine 13, isoleucine 14, lysine 38, and asparagine 123. Lysine 124 is a binding site for 1-deoxy-D-xylulose 5-phosphate. Glutamate 125 lines the NADPH pocket. Position 148 (aspartate 148) interacts with Mn(2+). Serine 149, glutamate 150, serine 174, and histidine 197 together coordinate 1-deoxy-D-xylulose 5-phosphate. Mn(2+) is bound at residue glutamate 150. Residue glycine 203 coordinates NADPH. 4 residues coordinate 1-deoxy-D-xylulose 5-phosphate: serine 210, asparagine 215, lysine 216, and glutamate 219. Glutamate 219 lines the Mn(2+) pocket.

Belongs to the DXR family. Mg(2+) serves as cofactor. It depends on Mn(2+) as a cofactor.

The catalysed reaction is 2-C-methyl-D-erythritol 4-phosphate + NADP(+) = 1-deoxy-D-xylulose 5-phosphate + NADPH + H(+). The protein operates within isoprenoid biosynthesis; isopentenyl diphosphate biosynthesis via DXP pathway; isopentenyl diphosphate from 1-deoxy-D-xylulose 5-phosphate: step 1/6. In terms of biological role, catalyzes the NADPH-dependent rearrangement and reduction of 1-deoxy-D-xylulose-5-phosphate (DXP) to 2-C-methyl-D-erythritol 4-phosphate (MEP). This is 1-deoxy-D-xylulose 5-phosphate reductoisomerase from Halothermothrix orenii (strain H 168 / OCM 544 / DSM 9562).